Consider the following 237-residue polypeptide: MPKTVKNPKNNKSRSRGAPIQVAESIGSGSAKIKKKIRDIERLIKKNPNLPADKKIEYDRALKGLKVELQNSQVQNKAKVLAKKYHMVRFFERKKAVRKLKNLRKEFERISQTGIRKDIKKARKQLRHGEIDLAYVILFPKTEKYISLYPSPNDEDQTDPNVIKGLKITEERRREFRKYIEKLMEEGKLPFSIDDALQGKNIRLDNDKTQKAVLTEEIDAPEQKQDEQQEEQDDFFE.

The disordered stretch occupies residues 1–24; the sequence is MPKTVKNPKNNKSRSRGAPIQVAE. Coiled coils occupy residues 53-113 and 166-186; these read DKKI…ISQT and LKITEERRREFRKYIEKLMEE. Positions 206–237 are disordered; that stretch reads NDKTQKAVLTEEIDAPEQKQDEQQEEQDDFFE. The span at 228 to 237 shows a compositional bias: acidic residues; it reads QQEEQDDFFE.

Belongs to the EFG1 family.

Its subcellular location is the nucleus. The protein resides in the nucleolus. Functionally, involved in rRNA processing. The sequence is that of rRNA-processing protein EFG1 from Candida albicans (strain SC5314 / ATCC MYA-2876) (Yeast).